The chain runs to 179 residues: Large ribosomal subunit protein uL5 (179 aa).

This sequence belongs to the universal ribosomal protein uL5 family. As to quaternary structure, part of the 50S ribosomal subunit; part of the 5S rRNA/L5/L18/L25 subcomplex. Contacts the 5S rRNA and the P site tRNA. Forms a bridge to the 30S subunit in the 70S ribosome.

Its function is as follows. This is one of the proteins that bind and probably mediate the attachment of the 5S RNA into the large ribosomal subunit, where it forms part of the central protuberance. In the 70S ribosome it contacts protein S13 of the 30S subunit (bridge B1b), connecting the 2 subunits; this bridge is implicated in subunit movement. Contacts the P site tRNA; the 5S rRNA and some of its associated proteins might help stabilize positioning of ribosome-bound tRNAs. The chain is Large ribosomal subunit protein uL5 from Proteus mirabilis (strain HI4320).